The chain runs to 270 residues: Sugar phosphatase YidA (270 aa).

D9 acts as the Nucleophile in catalysis. D9 is a binding site for Mg(2+). M10 is a binding site for phosphate. Residue D11 participates in Mg(2+) binding. Phosphate contacts are provided by residues 43–44 (TG) and K197. Residue D220 coordinates Mg(2+). N223 is a phosphate binding site.

The protein belongs to the HAD-like hydrolase superfamily. Cof family. Homodimer. Mg(2+) is required as a cofactor.

The catalysed reaction is sugar phosphate + H2O = sugar + phosphate.. Functionally, catalyzes the dephosphorylation of different sugar phosphates. This chain is Sugar phosphatase YidA (yidA), found in Escherichia coli O6:H1 (strain CFT073 / ATCC 700928 / UPEC).